The primary structure comprises 896 residues: MEEVTLDKLATDVGTTVDRLVQQFAEAGMTKKAGDSVNEEEKQKLLAHLNRQHGGGGSSEPSKMTLKRKTKSTLSVGGGRDSKSVQVEVRKKRTYVKRSASEEQEREEQERLAQEKEAEEAKLREEEKQREEEQQRKEAEAKAKAEREKAEKEKAEKEKLRKEKEKERQKAEAEKRAAMTPEEREAADKAKADAEKLKRQQEEEARKKAEKEAEAQAEEARKLAEENAKRWEEEEQKRKQQEKEDVHFTTSSTAQEAEDAQDFDEERKSRKRGKKRRRKDEESDDTPRREKRRKGARRGSSLQQGFNKPAQPVERDVKIGETITVGELANRMAVKASDLIKTMMKMGEMVTINQILDQDTAALVVEELGHKPALVKDNALEEEVLSDRQEGGEEAPRAPVVTVMGHVDHGKTSLLDYIRKAKVASGEAGGITQHIGAYHVETGHGMVTFLDTPGHAAFTSMRARGAGATDVVILVVAADDGVMPQTKEAVQHAKAAGVPLVVAINKMDKEGADPDRVKNELSQLEVIPEDWGGDVQFIPLSAHTGEGIDELLEAILLQSEVLDLRAEKTGMASGIVVESRLDRGRGPVATVLVQRGLLKQGDVVLCGLEYGRIRAMRDETGKEIKEAGPSIPVEILGLSGVPQAGDEATVVRDERKAREVANYRQGKYRDVKLAKQQKAKLENMFADMAEGDVAELNIVLKSDVQGSLEAISDALTKLSTDEVKVNIIGSGVGGITETDISLASASNAIVVGFNVRAEAAARKLVEQESVDLRYYSVIYDLIDEVKAAMSGMLQPEFKQQIIGLAEVRDVFKSPKIGAIAGCMVTEGVVKRSAPIRVLRDNVVIYEGELESLRRFKDDVQEVRNGMECGIGVKNYNDVKEGDQIEVFETIQIERTL.

A disordered region spans residues 46 to 315 (LAHLNRQHGG…FNKPAQPVER (270 aa)). Residues 99-247 (SASEEQEREE…RKQQEKEDVH (149 aa)) are compositionally biased toward basic and acidic residues. The span at 269–278 (SRKRGKKRRR) shows a compositional bias: basic residues. A compositionally biased stretch (basic and acidic residues) spans 279–288 (KDEESDDTPR). The tr-type G domain occupies 396 to 565 (PRAPVVTVMG…LLQSEVLDLR (170 aa)). Residues 405-412 (GHVDHGKT) are G1. Position 405-412 (405-412 (GHVDHGKT)) interacts with GTP. Residues 430–434 (GITQH) form a G2 region. Positions 451–454 (DTPG) are G3. GTP is bound by residues 451 to 455 (DTPGH) and 505 to 508 (NKMD). Residues 505-508 (NKMD) form a G4 region. The segment at 541–543 (SAH) is G5.

This sequence belongs to the TRAFAC class translation factor GTPase superfamily. Classic translation factor GTPase family. IF-2 subfamily.

Its subcellular location is the cytoplasm. Its function is as follows. One of the essential components for the initiation of protein synthesis. Protects formylmethionyl-tRNA from spontaneous hydrolysis and promotes its binding to the 30S ribosomal subunits. Also involved in the hydrolysis of GTP during the formation of the 70S ribosomal complex. This Idiomarina loihiensis (strain ATCC BAA-735 / DSM 15497 / L2-TR) protein is Translation initiation factor IF-2.